Reading from the N-terminus, the 134-residue chain is Cytochrome b5 isoform E (134 aa).

In terms of domain architecture, Cytochrome b5 heme-binding spans Arg-5–Asp-81. Residues His-40 and His-64 each coordinate heme. Residues Phe-107–Val-127 traverse the membrane as a helical segment. The AKR2A-binding sequence (ABS) required for endoplasmic reticulum membrane targeting motif lies at Arg-128–Asp-134.

Belongs to the cytochrome b5 family. In terms of assembly, interacts with CER1, BI-1, FAH1 and FAH2. Interacts with AKR2A. Expressed in roots, stems, leaves, flowers and siliques.

The protein localises to the cell membrane. The protein resides in the endoplasmic reticulum membrane. Functionally, membrane bound hemoprotein which function as an electron carrier for several membrane bound oxygenases, including fatty acid desaturases. The polypeptide is Cytochrome b5 isoform E (CYTB5-E) (Arabidopsis thaliana (Mouse-ear cress)).